A 457-amino-acid chain; its full sequence is Probable cytosolic Fe-S cluster assembly factor oxy-4 (457 aa).

Cysteine 25 provides a ligand contact to [4Fe-4S] cluster. The disordered stretch occupies residues 38 to 59; that stretch reads KEESQVNIRTKKPKDKESSKTE. Residues cysteine 71, cysteine 74, cysteine 77, cysteine 176, cysteine 232, cysteine 380, and cysteine 384 each contribute to the [4Fe-4S] cluster site.

Belongs to the NARF family.

Functionally, component of the cytosolic iron-sulfur (Fe/S) protein assembly machinery. Required for maturation of extramitochondrial Fe/S proteins. The protein is Probable cytosolic Fe-S cluster assembly factor oxy-4 (oxy-4) of Caenorhabditis elegans.